Here is a 319-residue protein sequence, read N- to C-terminus: Glycine--tRNA ligase alpha subunit (319 aa).

This sequence belongs to the class-II aminoacyl-tRNA synthetase family. In terms of assembly, tetramer of two alpha and two beta subunits.

The protein resides in the cytoplasm. The catalysed reaction is tRNA(Gly) + glycine + ATP = glycyl-tRNA(Gly) + AMP + diphosphate. The sequence is that of Glycine--tRNA ligase alpha subunit from Coxiella burnetii (strain CbuK_Q154) (Coxiella burnetii (strain Q154)).